Reading from the N-terminus, the 132-residue chain is MTLNLCVLTPNRIVWDSEVKEIILSTNSGQIGVLANHAPIATAVDIGILKIRLANQWLTMALMGGFARIGNNEITILVNDAEKNSDIDPQEAQQTLEIAEANLRKAEGKRQTIEANLALRRARTRVEALNTI.

An N-acetylthreonine modification is found at Thr-2.

The protein belongs to the ATPase epsilon chain family. In terms of assembly, F-type ATPases have 2 components, CF(1) - the catalytic core - and CF(0) - the membrane proton channel. CF(1) has five subunits: alpha(3), beta(3), gamma(1), delta(1), epsilon(1). CF(0) has three main subunits: a, b and c.

It is found in the plastid. Its subcellular location is the chloroplast thylakoid membrane. Functionally, produces ATP from ADP in the presence of a proton gradient across the membrane. This is ATP synthase epsilon chain, chloroplastic from Arabidopsis thaliana (Mouse-ear cress).